The sequence spans 613 residues: Probable hydrolase clz13 (613 aa).

An N-terminal signal peptide occupies residues 1-25 (MCLLSMRFTVAILLVLLSHCGGSHA). N-linked (GlcNAc...) asparagine glycans are attached at residues Asn-61, Asn-89, Asn-286, Asn-422, Asn-456, Asn-477, and Asn-581.

The protein belongs to the beta-lactamase family.

It participates in secondary metabolite biosynthesis. Its function is as follows. Probable hydrolase; part of the gene cluster that mediates the biosynthesis of squalestatin S1 (SQS1, also known as zaragozic acid A), a heavily oxidized fungal polyketide that offers potent cholesterol lowering activity by targeting squalene synthase (SS). SQS1 is composed of a 2,8-dioxobicyclic[3.2.1]octane-3,4,5-tricarboxyclic acid core that is connected to two lipophilic polyketide arms. These initial steps feature the priming of an unusual benzoic acid starter unit onto the highly reducing polyketide synthase clz14, followed by oxaloacetate extension and product release to generate a tricarboxylic acid containing product. The phenylalanine ammonia lyase (PAL) clz10 and the acyl-CoA ligase clz12 are involved in transforming phenylalanine into benzoyl-CoA. The citrate synthase-like protein clz17 is involved in connecting the C-alpha-carbons of the hexaketide chain and oxaloacetate to afford the tricarboxylic acid unit. The potential hydrolytic enzymes, clz11 and clz13, are in close proximity to pks2 and may participate in product release. On the other side, the tetraketide arm is synthesized by a the squalestatin tetraketide synthase clz2 and enzymatically esterified to the core in the last biosynthetic step, by the acetyltransferase clz6. The biosynthesis of the tetraketide must involve 3 rounds of chain extension. After the first and second rounds methyl-transfer occurs, and in all rounds of extension the ketoreductase and dehydratase are active. The enoyl reductase and C-MeT of clz2 are not active in the final round of extension. The acetyltransferase clz6 appears to have a broad substrate selectivity for its acyl CoA substrate, allowing the in vitro synthesis of novel squalestatins. The biosynthesis of SQS1 requires several oxidative steps likely performed by oxidoreductases clz3, clz15 and clz16. Finally, in support of the identification of the cluster as being responsible for SQS1 production, the cluster contains a gene encoding a putative squalene synthase (SS) clz20, suggesting a likely mechanism for self-resistance. The polypeptide is Probable hydrolase clz13 (Cochliobolus lunatus (Filamentous fungus)).